The sequence spans 282 residues: Pantothenate synthetase (282 aa).

Position 30-37 (30-37) interacts with ATP; it reads MGYLHEGH. Histidine 37 serves as the catalytic Proton donor. Residue glutamine 61 coordinates (R)-pantoate. Glutamine 61 lines the beta-alanine pocket. Residue 147–150 coordinates ATP; that stretch reads GMKD. Glutamine 153 provides a ligand contact to (R)-pantoate. Residues valine 176 and 184-187 each bind ATP; that span reads KSSR.

This sequence belongs to the pantothenate synthetase family. As to quaternary structure, homodimer.

It localises to the cytoplasm. It catalyses the reaction (R)-pantoate + beta-alanine + ATP = (R)-pantothenate + AMP + diphosphate + H(+). It functions in the pathway cofactor biosynthesis; (R)-pantothenate biosynthesis; (R)-pantothenate from (R)-pantoate and beta-alanine: step 1/1. Its function is as follows. Catalyzes the condensation of pantoate with beta-alanine in an ATP-dependent reaction via a pantoyl-adenylate intermediate. The protein is Pantothenate synthetase of Bacillus thuringiensis subsp. konkukian (strain 97-27).